We begin with the raw amino-acid sequence, 103 residues long: Large ribosomal subunit protein bL21 (103 aa).

The protein belongs to the bacterial ribosomal protein bL21 family. In terms of assembly, part of the 50S ribosomal subunit. Contacts protein L20.

This protein binds to 23S rRNA in the presence of protein L20. This Bordetella petrii (strain ATCC BAA-461 / DSM 12804 / CCUG 43448) protein is Large ribosomal subunit protein bL21.